A 420-amino-acid chain; its full sequence is Tubulin epsilon and delta complex protein 1 (420 aa).

A coiled-coil region spans residues 276–340 (SEGGLGELES…AVQQELAALQ (65 aa)). A compositionally biased stretch (polar residues) spans 342-351 (SWEQSSTPGQ). Positions 342–369 (SWEQSSTPGQPQRPHRLVRSKDGAPRPQ) are disordered. A coiled-coil region spans residues 377–409 (IRTLSAKEACLKKALHQLQRQCQQELARLAGAL).

As to quaternary structure, interacts with TEDC2. Found in a complex with TEDC1, TEDC2, TUBE1 and TUBD1.

The protein resides in the cell projection. Its subcellular location is the cilium. The protein localises to the cytoplasm. It localises to the cytoskeleton. It is found in the microtubule organizing center. The protein resides in the centrosome. Its subcellular location is the centriole. Functionally, acts as a positive regulator of ciliary hedgehog signaling. Required for centriole stability. May play a role in counteracting perturbation of actin filaments, such as after treatment with the actin depolymerizing microbial metabolite Chivosazole F. The polypeptide is Tubulin epsilon and delta complex protein 1 (Mus musculus (Mouse)).